A 621-amino-acid polypeptide reads, in one-letter code: tRNA uridine 5-carboxymethylaminomethyl modification enzyme MnmG (621 aa).

FAD is bound at residue 8–13 (GAGHAG). NAD(+) is bound at residue 269–283 (GPRYCPSIEDKIHRF).

The protein belongs to the MnmG family. In terms of assembly, homodimer. Heterotetramer of two MnmE and two MnmG subunits. Requires FAD as cofactor.

It localises to the cytoplasm. Its function is as follows. NAD-binding protein involved in the addition of a carboxymethylaminomethyl (cmnm) group at the wobble position (U34) of certain tRNAs, forming tRNA-cmnm(5)s(2)U34. The protein is tRNA uridine 5-carboxymethylaminomethyl modification enzyme MnmG of Chlorobium phaeovibrioides (strain DSM 265 / 1930) (Prosthecochloris vibrioformis (strain DSM 265)).